The following is a 739-amino-acid chain: TonB-dependent heme receptor A (739 aa).

The N-terminal stretch at 1-22 is a signal peptide; the sequence is MKMKKQCATLTFFIGLHGYTIA. In terms of domain architecture, TBDR plug spans 38 to 150; the sequence is GHHERQPDRS…FAGTIKLETK (113 aa). The TBDR beta-barrel domain occupies 161-739; sequence LLGGLLKYGY…NIKLSISKQF (579 aa).

This sequence belongs to the TonB-dependent receptor family.

The protein resides in the cell outer membrane. Its function is as follows. Heme receptor. The chain is TonB-dependent heme receptor A (tdhA) from Haemophilus ducreyi (strain 35000HP / ATCC 700724).